A 587-amino-acid polypeptide reads, in one-letter code: UDP-N-acetylmuramoylalanine--D-glutamate ligase (587 aa).

A disordered region spans residues 124–147 (DHLVPPESPLSDASDISDASDATD). Positions 132–147 (PLSDASDISDASDATD) are enriched in low complexity. Position 214–220 (214–220 (GTNGKTT)) interacts with ATP.

It belongs to the MurCDEF family.

The protein localises to the cytoplasm. The enzyme catalyses UDP-N-acetyl-alpha-D-muramoyl-L-alanine + D-glutamate + ATP = UDP-N-acetyl-alpha-D-muramoyl-L-alanyl-D-glutamate + ADP + phosphate + H(+). Its pathway is cell wall biogenesis; peptidoglycan biosynthesis. Cell wall formation. Catalyzes the addition of glutamate to the nucleotide precursor UDP-N-acetylmuramoyl-L-alanine (UMA). The protein is UDP-N-acetylmuramoylalanine--D-glutamate ligase of Polaromonas sp. (strain JS666 / ATCC BAA-500).